Reading from the N-terminus, the 167-residue chain is Insertion element IS1 4 protein InsB (167 aa).

Belongs to the transposase 27 family.

Functionally, absolutely required for transposition of IS1. This Escherichia coli (strain K12) protein is Insertion element IS1 4 protein InsB (insB4).